We begin with the raw amino-acid sequence, 291 residues long: ATP synthase subunit a (291 aa).

5 consecutive transmembrane segments (helical) span residues 48–68, 108–128, 161–181, 241–261, and 262–282; these read IHLD…LVFW, IAPL…MDLI, DPNI…FYSI, LIFI…SVPW, and AIFH…LTIV.

This sequence belongs to the ATPase A chain family. As to quaternary structure, F-type ATPases have 2 components, CF(1) - the catalytic core - and CF(0) - the membrane proton channel. CF(1) has five subunits: alpha(3), beta(3), gamma(1), delta(1), epsilon(1). CF(0) has three main subunits: a(1), b(2) and c(9-12). The alpha and beta chains form an alternating ring which encloses part of the gamma chain. CF(1) is attached to CF(0) by a central stalk formed by the gamma and epsilon chains, while a peripheral stalk is formed by the delta and b chains.

Its subcellular location is the cell inner membrane. Functionally, key component of the proton channel; it plays a direct role in the translocation of protons across the membrane. The sequence is that of ATP synthase subunit a from Acinetobacter baylyi (strain ATCC 33305 / BD413 / ADP1).